We begin with the raw amino-acid sequence, 843 residues long: Proto-oncogene vav (843 aa).

Positions 1 to 119 constitute a Calponin-homology (CH) domain; the sequence is MELWRQCTHW…YTLSALSWTP (119 aa). A DH domain is found at 194–373; that stretch reads KRCCCLREIQ…RDLAQCVNEV (180 aa). The 103-residue stretch at 402–504 folds into the PH domain; it reads RPKIDGELKI…WMEQFEMAIS (103 aa). The segment at 515 to 564 adopts a Phorbol-ester/DAG-type zinc-finger fold; the sequence is GHDFQMFSFEETTSCKACQMLLRGTFYQGYRCYRCRAPAHKECLGRVPPC. Residues 590–658 form the SH3 1 domain; it reads LGLPKMEVCQ…PCNRVRPYVH (69 aa). The SH2 domain maps to 669 to 763; it reads WYAGPMERAG…SLDTTLQFPY (95 aa). An SH3 2 domain is found at 780–840; it reads KYFGTAKARY…PSNYVEEDYS (61 aa). Residues Y824 and Y842 each carry the phosphotyrosine modification.

In terms of assembly, interacts with SHB. Interacts with APS, DOCK2, GRB2, GRB3, DOCK2, SLA, TEC and ZNF655/VIK. Interacts with SIAH2; without leading to its degradation. Associates with BLNK, PLCG1, GRB2 and NCK1 in a B-cell antigen receptor-dependent fashion. Interacts with CBLB; which inhibits tyrosine phosphorylation and down-regulates activity. May interact with CCPG1. Interacts with CLNK. Interacts with THEMIS2. Interacts with NEK3 and this interaction is prolactin-dependent. Interacts with ITK. Interacts with PTK2B/PYK2. Interacts with HCK. Interacts with PTK2B/PYK2. Interacts (via SH2 domain) with SYK. Interacts with ANKRD54. Interacts with CD6. Interacts with LCP2; this interaction plays a role in TCR-mediated cytokine production. In terms of processing, phosphorylated by FYN. Phosphorylated on tyrosine residues by HCK in response to IFNG and bacterial lipopolysaccharide (LPS).

Couples tyrosine kinase signals with the activation of the Rho/Rac GTPases, thus leading to cell differentiation and/or proliferation. The polypeptide is Proto-oncogene vav (Vav1) (Rattus norvegicus (Rat)).